Reading from the N-terminus, the 418-residue chain is Coenzyme A biosynthesis bifunctional protein CoaBC (418 aa).

Residues 1 to 195 (MVDHKRIPKQ…ALPYDLAGRK (195 aa)) form a phosphopantothenoylcysteine decarboxylase region. Residues 196 to 418 (LLVTAGGTRE…IVTFLAGCSS (223 aa)) are phosphopantothenate--cysteine ligase. The CTP site is built by Asp-285, Lys-295, Phe-336, Lys-354, and Lys-358.

In the N-terminal section; belongs to the HFCD (homo-oligomeric flavin containing Cys decarboxylase) superfamily. This sequence in the C-terminal section; belongs to the PPC synthetase family. The cofactor is Mg(2+). FMN serves as cofactor.

It catalyses the reaction N-[(R)-4-phosphopantothenoyl]-L-cysteine + H(+) = (R)-4'-phosphopantetheine + CO2. It carries out the reaction (R)-4'-phosphopantothenate + L-cysteine + CTP = N-[(R)-4-phosphopantothenoyl]-L-cysteine + CMP + diphosphate + H(+). It participates in cofactor biosynthesis; coenzyme A biosynthesis; CoA from (R)-pantothenate: step 2/5. Its pathway is cofactor biosynthesis; coenzyme A biosynthesis; CoA from (R)-pantothenate: step 3/5. Catalyzes two sequential steps in the biosynthesis of coenzyme A. In the first step cysteine is conjugated to 4'-phosphopantothenate to form 4-phosphopantothenoylcysteine. In the second step the latter compound is decarboxylated to form 4'-phosphopantotheine. The protein is Coenzyme A biosynthesis bifunctional protein CoaBC of Mycobacterium bovis (strain ATCC BAA-935 / AF2122/97).